A 155-amino-acid polypeptide reads, in one-letter code: Ribonuclease H (155 aa).

An RNase H type-1 domain is found at 1-142 (MLKQVEIFTD…CDELARNAAG (142 aa)). Mg(2+)-binding residues include Asp10, Glu48, Asp70, and Asp134.

This sequence belongs to the RNase H family. In terms of assembly, monomer. Requires Mg(2+) as cofactor.

The protein localises to the cytoplasm. The catalysed reaction is Endonucleolytic cleavage to 5'-phosphomonoester.. Its function is as follows. Endonuclease that specifically degrades the RNA of RNA-DNA hybrids. In Erwinia tasmaniensis (strain DSM 17950 / CFBP 7177 / CIP 109463 / NCPPB 4357 / Et1/99), this protein is Ribonuclease H.